The following is a 294-amino-acid chain: N-acetylmuramic acid 6-phosphate etherase (294 aa).

Residues V54–K217 form the SIS domain. E82 functions as the Proton donor in the catalytic mechanism. E113 is a catalytic residue.

The protein belongs to the GCKR-like family. MurNAc-6-P etherase subfamily. As to quaternary structure, homodimer.

The enzyme catalyses N-acetyl-D-muramate 6-phosphate + H2O = N-acetyl-D-glucosamine 6-phosphate + (R)-lactate. It functions in the pathway amino-sugar metabolism; N-acetylmuramate degradation. In terms of biological role, specifically catalyzes the cleavage of the D-lactyl ether substituent of MurNAc 6-phosphate, producing GlcNAc 6-phosphate and D-lactate. In Bacillus cereus (strain AH187), this protein is N-acetylmuramic acid 6-phosphate etherase.